A 1121-amino-acid polypeptide reads, in one-letter code: uncharacterized protein (1121 aa).

A disordered region spans residues 179-198 (GPGECQSVHNQSSGSGSNSY). N-linked (GlcNAc...) asparagine; by host glycans are attached at residues N188, N325, N351, N449, N561, and N615. Disordered stretches follow at residues 649–684 (KRIHSQNENPEDGQVREGGCSDVRNEPPRKSARIHN) and 701–734 (STRQDASGGSSSGTKNEYYDDESELTGLSDTDSD). Over residues 701–715 (STRQDASGGSSSGTK) the composition is skewed to polar residues. N838, N911, N914, and N980 each carry an N-linked (GlcNAc...) asparagine; by host glycan.

The protein belongs to the herpesviridae US22 family.

This is an uncharacterized protein from Homo sapiens (Human).